A 1031-amino-acid chain; its full sequence is Protein draper (1031 aa).

Positions 1–16 are cleaved as a signal peptide; that stretch reads MLPVILIACLAQLVLA. The Extracellular portion of the chain corresponds to 17-800; that stretch reads QADLKDLDGP…DQSENSSRAS (784 aa). The EMI domain occupies 25 to 100; it reads GPNICKRREL…YIASAGECVP (76 aa). 6 cysteine pairs are disulfide-bonded: cysteine 29–cysteine 88, cysteine 55–cysteine 62, cysteine 87–cysteine 98, cysteine 102–cysteine 111, cysteine 106–cysteine 117, and cysteine 119–cysteine 128. N-linked (GlcNAc...) asparagine glycosylation occurs at asparagine 73. EGF-like domains are found at residues 99-129, 137-172, 180-215, 223-258, 266-301, and 309-344; these read VPHC…PACD, YGRN…ARCA, FGAN…PLCD, HGAQ…DVCA, YGPG…ERCF, and YGFN…AKCA. Asparagine 140 carries an N-linked (GlcNAc...) asparagine glycan. 3 disulfides stabilise this stretch: cysteine 141–cysteine 153, cysteine 147–cysteine 160, and cysteine 162–cysteine 171. N-linked (GlcNAc...) asparagine glycosylation occurs at asparagine 183. Disulfide bonds link cysteine 184–cysteine 196, cysteine 190–cysteine 203, cysteine 205–cysteine 214, cysteine 227–cysteine 239, cysteine 233–cysteine 246, cysteine 248–cysteine 257, cysteine 270–cysteine 282, cysteine 276–cysteine 289, and cysteine 291–cysteine 300. Residue asparagine 312 is glycosylated (N-linked (GlcNAc...) asparagine). Disulfide bonds link cysteine 313–cysteine 325, cysteine 319–cysteine 332, and cysteine 334–cysteine 343. A glycan (N-linked (GlcNAc...) asparagine) is linked at asparagine 329. Asparagine 358 carries N-linked (GlcNAc...) asparagine glycosylation. EGF-like domains lie at 398–433 and 484–519; these read YGPN…PTCE and FGQD…ERCE. Intrachain disulfides connect cysteine 402-cysteine 414, cysteine 408-cysteine 421, cysteine 423-cysteine 432, cysteine 488-cysteine 500, cysteine 494-cysteine 507, and cysteine 509-cysteine 518. Asparagine 418 carries N-linked (GlcNAc...) asparagine glycosylation. An N-linked (GlcNAc...) asparagine glycan is attached at asparagine 504. N-linked (GlcNAc...) asparagine glycosylation is found at asparagine 540, asparagine 584, and asparagine 585. In terms of domain architecture, EGF-like 9 spans 572–607; that stretch reads YGENCDKVCRCLNNSSCDPDSGNCICSAGWTGADCA. Disulfide bonds link cysteine 576–cysteine 588, cysteine 582–cysteine 595, and cysteine 597–cysteine 606. An N-linked (GlcNAc...) asparagine glycan is attached at asparagine 630. Positions 660–695 constitute an EGF-like 10 domain; sequence YGPGCKLKCNCEHGGECNHVTGQCQCLPGWTGSNCN. 3 cysteine pairs are disulfide-bonded: cysteine 664-cysteine 676, cysteine 670-cysteine 683, and cysteine 685-cysteine 694. Asparagine 695 and asparagine 795 each carry an N-linked (GlcNAc...) asparagine glycan. Residues 801 to 821 form a helical membrane-spanning segment; it reads VALTLVLMTLFACIIFAVFIY. Residues 822 to 1031 lie on the Cytoplasmic side of the membrane; the sequence is YRRRVSNLKT…SPSSSPKFLK (210 aa). A compositionally biased stretch (basic and acidic residues) spans 940–954; that stretch reads KEGYKDPDEYDHLDY. 2 disordered regions span residues 940 to 964 and 989 to 1031; these read KEGY…QKPH and TVLL…KFLK. Over residues 1009–1031 the composition is skewed to polar residues; sequence DNTNTNLDNVSTASPSSSPKFLK.

The protein belongs to the MEGF family. As to quaternary structure, interacts (via the cytoplasmic domain) with shark; this is required for the recruitment of drpr and glial cells to severed axons and for the phagocytosis of axonal debris by glial cells following axon injury. Interacts with ced-6. In terms of assembly, interacts with csw; this results in dephosphorylation of drpr isoform A which is required for the inhibition of glial cell engulfment of axonal debris produced following axonal injury. In terms of processing, phosphorylated on tyrosine residues. Phosphorylation is induced by binding to prtp. It is also induced by binding to the membrane phospholipid phosphatidylserine. Phosphorylation may be mediated directly or indirectly by Src42a and is required for interaction with shark. Post-translationally, dephosphorylated by csw which is required for the inhibition of glial cell engulfment of axonal debris produced following axonal injury. Expressed in adult head (at protein level). Expressed in glia, macrophages and ectoderm (at protein level). Detected in glia around the mushroom body dorsal lobe and in glial processes infiltrating the medial lobe (at protein level). Expressed in adult brain glia including antennal lobe glia (at protein level). Expressed in the larval fat body (at protein level). Expressed in the ovary (at protein level). Isoform B: Predominant isoform in adult glia.

It is found in the cell membrane. The protein localises to the cell projection. The protein resides in the axon. Its subcellular location is the cytoplasm. It localises to the postsynaptic cell membrane. It is found in the cell cortex. The protein localises to the phagocytic cup. The protein resides in the cytoplasmic vesicle. Its subcellular location is the phagosome. Receptor which is involved in the phagocytosis of a variety of cells including apoptotic cells, severed and pruned axons, degenerating dendrites, salivary gland cells, germline cells and bacteria. Binds to the ligand prtp which relocates from the endoplasmic reticulum to the cell surface during apoptosis. Ligand-binding may promote tyrosine phosphorylation mediated by Src42a, interaction with shark and subsequent activation of phagocytosis. Also binds to the membrane phospholipid phosphatidylserine which is exposed on the surface of apoptotic cells. Required for the phagocytosis of apoptotic cells by macrophages. Also required for the phagocytosis of apoptotic neurons by glial cells in the embryonic nervous system. Acts downstream of NimC4/simu in the glial phagocytosis of apoptotic neurons. Plays a role in the glial engulfment of larval axons as part of programmed axon pruning during metamorphosis. Also mediates glial cell clearance of severed axons following axonal injury. Required for the engulfment of degenerating dendrites by epidermal cells. Required in the ovary for the engulfment and subsequent processing of dying germline cells by follicular epithelial cells through activation of the JNK/bsk pathway. Plays a role in neuromuscular junction development by mediating the clearance of presynaptic debris and immature boutons which are shed by growing synapses. Required for larval salivary gland cell death which occurs following a rise in steroid levels after puparium formation. Also involved in bacterial phagocytosis. Required for hemocyte phagocytosis of the Gram-positive bacterium S.aureus. Lipoteichoic acid, synthesized by the S.aureus lipoteichoic acid synthase ltaS, acts as a ligand for drpr in this process. Together with Src42a and shark, promotes the migration of macrophages to sites of wounding as part of a signaling cascade where Scr42a detects production of hydrogen peroxide at wound sites which triggers phosphorylation of drpr and subsequent recruitment and activation of shark. Also required for macrophage priming which occurs following phagocytosis of apoptotic cells and ensures that macrophages develop a form of molecular memory that allows them to later mount an inflammatory response to tissue damage and bacterial infection. Is also an essential factor in the regulation of muscle development and myogenesis, and as a consequence is required for normal locomotion. Likely to control the balance between skeletal muscle satellite cells proliferation and differentiation through regulation of the notch signaling pathway. Functionally, promotes engulfment of axonal debris by glial cells following axonal injury. In terms of biological role, potently inhibits glial cell engulfment of axonal debris produced following axonal injury. The sequence is that of Protein draper from Drosophila melanogaster (Fruit fly).